The sequence spans 341 residues: Hygromycin-B 4-O-kinase (341 aa).

Catalysis depends on Asp-198, which acts as the Proton acceptor.

The protein belongs to the aminoglycoside phosphotransferase family.

It carries out the reaction hygromycin B + ATP = 4-O-phosphohygromycin B + ADP + H(+). In terms of biological role, the aminoglycoside phosphotransferases achieve inactivation of their antibiotic substrates by phosphorylation. Only phosphorylates hygromycin and closely related compounds such as demethyl analogs and destomycin. This Escherichia coli protein is Hygromycin-B 4-O-kinase (hph).